A 158-amino-acid chain; its full sequence is NADPH-dependent 7-cyano-7-deazaguanine reductase (158 aa).

Cys-56 functions as the Thioimide intermediate in the catalytic mechanism. Asp-63 (proton donor) is an active-site residue. Residues 78–80 (LES) and 97–98 (HE) each bind substrate.

The protein belongs to the GTP cyclohydrolase I family. QueF type 1 subfamily.

The protein localises to the cytoplasm. The enzyme catalyses 7-aminomethyl-7-carbaguanine + 2 NADP(+) = 7-cyano-7-deazaguanine + 2 NADPH + 3 H(+). The protein operates within tRNA modification; tRNA-queuosine biosynthesis. In terms of biological role, catalyzes the NADPH-dependent reduction of 7-cyano-7-deazaguanine (preQ0) to 7-aminomethyl-7-deazaguanine (preQ1). This chain is NADPH-dependent 7-cyano-7-deazaguanine reductase, found in Rhodopseudomonas palustris (strain TIE-1).